A 230-amino-acid chain; its full sequence is uncharacterized protein (230 aa).

Residues 19-39 form a helical membrane-spanning segment; it reads GIFQVLLQLVLAMMTVWDFAG. An N-linked (GlcNAc...) asparagine; by host glycan is attached at Asn-41. The chain crosses the membrane as a helical span at residues 55–75; that stretch reads SFLLVLYTGLKQILEYMFSIC. Residues Asn-86, Asn-157, Asn-168, and Asn-182 are each glycosylated (N-linked (GlcNAc...) asparagine; by host). A coiled-coil region spans residues 172 to 196; that stretch reads TNLHKYQNDENDTEEDSEDIEKNSD. The segment at 178–205 is disordered; sequence QNDENDTEEDSEDIEKNSDPKENSDIDS. The span at 180-190 shows a compositional bias: acidic residues; it reads DENDTEEDSED. Basic and acidic residues predominate over residues 191-201; that stretch reads IEKNSDPKENS.

Its subcellular location is the membrane. This is an uncharacterized protein from Acanthamoeba polyphaga mimivirus (APMV).